Consider the following 175-residue polypeptide: Crossover junction endodeoxyribonuclease RuvC (175 aa).

Residues Asp12, Glu72, and Asp144 contribute to the active site. Mg(2+) is bound by residues Asp12, Glu72, and Asp144.

The protein belongs to the RuvC family. In terms of assembly, homodimer which binds Holliday junction (HJ) DNA. The HJ becomes 2-fold symmetrical on binding to RuvC with unstacked arms; it has a different conformation from HJ DNA in complex with RuvA. In the full resolvosome a probable DNA-RuvA(4)-RuvB(12)-RuvC(2) complex forms which resolves the HJ. It depends on Mg(2+) as a cofactor.

The protein resides in the cytoplasm. The enzyme catalyses Endonucleolytic cleavage at a junction such as a reciprocal single-stranded crossover between two homologous DNA duplexes (Holliday junction).. In terms of biological role, the RuvA-RuvB-RuvC complex processes Holliday junction (HJ) DNA during genetic recombination and DNA repair. Endonuclease that resolves HJ intermediates. Cleaves cruciform DNA by making single-stranded nicks across the HJ at symmetrical positions within the homologous arms, yielding a 5'-phosphate and a 3'-hydroxyl group; requires a central core of homology in the junction. The consensus cleavage sequence is 5'-(A/T)TT(C/G)-3'. Cleavage occurs on the 3'-side of the TT dinucleotide at the point of strand exchange. HJ branch migration catalyzed by RuvA-RuvB allows RuvC to scan DNA until it finds its consensus sequence, where it cleaves and resolves the cruciform DNA. In Beijerinckia indica subsp. indica (strain ATCC 9039 / DSM 1715 / NCIMB 8712), this protein is Crossover junction endodeoxyribonuclease RuvC.